Reading from the N-terminus, the 281-residue chain is Putative E3 ubiquitin-protein ligase SINA-like 6 (281 aa).

The interval 1-26 (MVGVLLSERNGSQKRHCSSISSDDGR) is disordered. The RING-type zinc finger occupies 45–81 (CPICYQALKIPVFQCGNGHLACSSCCPKLRNKCPACA). The tract at residues 95–280 (VLESVLVPCR…MMLCINELKQ (186 aa)) is SBD. The SIAH-type zinc-finger motif lies at 98–156 (SVLVPCRYADLGCTKTIYYGRESTHEKICNFSPCSCPVQGCNYTGSYKDLYEHYDLTHS). Zn(2+) is bound by residues Cys-103, Cys-110, His-122, Cys-126, Cys-133, Cys-138, His-150, and His-155.

It belongs to the SINA (Seven in absentia) family.

The enzyme catalyses S-ubiquitinyl-[E2 ubiquitin-conjugating enzyme]-L-cysteine + [acceptor protein]-L-lysine = [E2 ubiquitin-conjugating enzyme]-L-cysteine + N(6)-ubiquitinyl-[acceptor protein]-L-lysine.. Its pathway is protein modification; protein ubiquitination. In terms of biological role, E3 ubiquitin-protein ligase that mediates ubiquitination and subsequent proteasomal degradation of target proteins. E3 ubiquitin ligases accept ubiquitin from an E2 ubiquitin-conjugating enzyme in the form of a thioester and then directly transfers the ubiquitin to targeted substrates. It probably triggers the ubiquitin-mediated degradation of different substrates. In Arabidopsis thaliana (Mouse-ear cress), this protein is Putative E3 ubiquitin-protein ligase SINA-like 6.